Consider the following 358-residue polypeptide: NADH-quinone oxidoreductase subunit H (358 aa).

8 helical membrane passes run 30–50 (IAVG…LIYM), 96–116 (FLYN…FACI), 129–149 (VGVF…LLAG), 168–188 (IISY…LMGT), 201–221 (GWFI…YLIA), 265–285 (FIVA…LHII), 297–317 (IPGF…LMWI), and 336–356 (YLVP…AFGF).

This sequence belongs to the complex I subunit 1 family. As to quaternary structure, NDH-1 is composed of 14 different subunits. Subunits NuoA, H, J, K, L, M, N constitute the membrane sector of the complex.

The protein resides in the cell inner membrane. It carries out the reaction a quinone + NADH + 5 H(+)(in) = a quinol + NAD(+) + 4 H(+)(out). In terms of biological role, NDH-1 shuttles electrons from NADH, via FMN and iron-sulfur (Fe-S) centers, to quinones in the respiratory chain. The immediate electron acceptor for the enzyme in this species is believed to be ubiquinone. Couples the redox reaction to proton translocation (for every two electrons transferred, four hydrogen ions are translocated across the cytoplasmic membrane), and thus conserves the redox energy in a proton gradient. This subunit may bind ubiquinone. This chain is NADH-quinone oxidoreductase subunit H, found in Bacteroides thetaiotaomicron (strain ATCC 29148 / DSM 2079 / JCM 5827 / CCUG 10774 / NCTC 10582 / VPI-5482 / E50).